Reading from the N-terminus, the 200-residue chain is Holliday junction branch migration complex subunit RuvA (200 aa).

The interval 1–64 is domain I; the sequence is MLSYLSGTLI…EDALQLYGFI (64 aa). The tract at residues 65–143 is domain II; that stretch reads TTEDREVFKL…KLDLKIDIKE (79 aa). Residues 144-148 are flexible linker; the sequence is TAFRS. The interval 149-200 is domain III; it reads DKQQVRNDAYSALISLGFTKSIAEKAMRAAIAEVPDGSVDDLIRVALRHVQS.

It belongs to the RuvA family. Homotetramer. Forms an RuvA(8)-RuvB(12)-Holliday junction (HJ) complex. HJ DNA is sandwiched between 2 RuvA tetramers; dsDNA enters through RuvA and exits via RuvB. An RuvB hexamer assembles on each DNA strand where it exits the tetramer. Each RuvB hexamer is contacted by two RuvA subunits (via domain III) on 2 adjacent RuvB subunits; this complex drives branch migration. In the full resolvosome a probable DNA-RuvA(4)-RuvB(12)-RuvC(2) complex forms which resolves the HJ.

It localises to the cytoplasm. The RuvA-RuvB-RuvC complex processes Holliday junction (HJ) DNA during genetic recombination and DNA repair, while the RuvA-RuvB complex plays an important role in the rescue of blocked DNA replication forks via replication fork reversal (RFR). RuvA specifically binds to HJ cruciform DNA, conferring on it an open structure. The RuvB hexamer acts as an ATP-dependent pump, pulling dsDNA into and through the RuvAB complex. HJ branch migration allows RuvC to scan DNA until it finds its consensus sequence, where it cleaves and resolves the cruciform DNA. This is Holliday junction branch migration complex subunit RuvA from Chloroherpeton thalassium (strain ATCC 35110 / GB-78).